The primary structure comprises 122 residues: NADH-quinone oxidoreductase subunit A (122 aa).

The next 3 helical transmembrane spans lie at 10–30 (MIVL…LTLG), 66–86 (IFAL…PWAV), and 91–111 (LGLF…VGLA).

The protein belongs to the complex I subunit 3 family. In terms of assembly, NDH-1 is composed of 14 different subunits. Subunits NuoA, H, J, K, L, M, N constitute the membrane sector of the complex.

Its subcellular location is the cell membrane. The catalysed reaction is a quinone + NADH + 5 H(+)(in) = a quinol + NAD(+) + 4 H(+)(out). In terms of biological role, NDH-1 shuttles electrons from NADH, via FMN and iron-sulfur (Fe-S) centers, to quinones in the respiratory chain. The immediate electron acceptor for the enzyme in this species is believed to be a menaquinone. Couples the redox reaction to proton translocation (for every two electrons transferred, four hydrogen ions are translocated across the cytoplasmic membrane), and thus conserves the redox energy in a proton gradient. This Bacillus mycoides (strain KBAB4) (Bacillus weihenstephanensis) protein is NADH-quinone oxidoreductase subunit A.